A 203-amino-acid polypeptide reads, in one-letter code: Small ribosomal subunit protein uS4c (203 aa).

Residues 18–42 (LPGLTSKRPKNRKDSMNMNRSSSRK) form a disordered region. Residues 33-42 (MNMNRSSSRK) show a composition bias toward polar residues. The S4 RNA-binding domain maps to 91–152 (MRLDNIIFRL…QPRLRAIIKK (62 aa)).

The protein belongs to the universal ribosomal protein uS4 family. In terms of assembly, part of the 30S ribosomal subunit. Contacts protein S5. The interaction surface between S4 and S5 is involved in control of translational fidelity.

The protein localises to the plastid. It is found in the chloroplast. Its function is as follows. One of the primary rRNA binding proteins, it binds directly to 16S rRNA where it nucleates assembly of the body of the 30S subunit. In terms of biological role, with S5 and S12 plays an important role in translational accuracy. The polypeptide is Small ribosomal subunit protein uS4c (rps4) (Pinus koraiensis (Korean pine)).